The sequence spans 408 residues: Neutral cholesterol ester hydrolase 1 (408 aa).

Residues 1–4 (MRSS) lie on the Cytoplasmic side of the membrane. A helical; Signal-anchor for type II membrane protein transmembrane segment spans residues 5–25 (CVLLAALLALVAYYVYIPLPS). Over 26 to 408 (AVSDPWKLML…SYFKWLDQNL (383 aa)) the chain is Lumenal. The short motif at 113–115 (HGG) is the Involved in the stabilization of the negatively charged intermediate by the formation of the oxyanion hole element. S191 is a catalytic residue. N270 carries N-linked (GlcNAc...) asparagine glycosylation. Residue D348 is part of the active site. N367 is a glycosylation site (N-linked (GlcNAc...) asparagine). H378 is a catalytic residue. The N-linked (GlcNAc...) asparagine glycan is linked to N389.

This sequence belongs to the 'GDXG' lipolytic enzyme family. N-glycosylated.

The protein localises to the cell membrane. The protein resides in the microsome. It carries out the reaction a 1-O-alkyl-2-acetyl-sn-glycerol + H2O = a 1-O-alkyl-sn-glycerol + acetate + H(+). It catalyses the reaction 1-O-hexadecyl-2-acetyl-sn-glycerol + H2O = 1-O-hexadecyl-sn-glycerol + acetate + H(+). The enzyme catalyses a cholesterol ester + H2O = cholesterol + a fatty acid + H(+). The catalysed reaction is cholesteryl (9Z-octadecenoate) + H2O = cholesterol + (9Z)-octadecenoate + H(+). In terms of biological role, hydrolyzes 2-acetyl monoalkylglycerol ether (1-O-alkyl-2-acetyl-sn-glycerol), the penultimate precursor of the pathway for de novo synthesis of platelet-activating factor. May be responsible for the hydrolysis of cholesterol esters (such as cholesteryl (9Z-octadecenoate)) in macrophages. Also involved in organ detoxification by hydrolyzing exogenous organophosphorus compounds. The chain is Neutral cholesterol ester hydrolase 1 (Nceh1) from Rattus norvegicus (Rat).